The sequence spans 369 residues: 4-hydroxy-3-methylbut-2-en-1-yl diphosphate synthase (flavodoxin) (369 aa).

The [4Fe-4S] cluster site is built by C270, C273, C305, and E312.

Belongs to the IspG family. Requires [4Fe-4S] cluster as cofactor.

The enzyme catalyses (2E)-4-hydroxy-3-methylbut-2-enyl diphosphate + oxidized [flavodoxin] + H2O + 2 H(+) = 2-C-methyl-D-erythritol 2,4-cyclic diphosphate + reduced [flavodoxin]. It functions in the pathway isoprenoid biosynthesis; isopentenyl diphosphate biosynthesis via DXP pathway; isopentenyl diphosphate from 1-deoxy-D-xylulose 5-phosphate: step 5/6. Converts 2C-methyl-D-erythritol 2,4-cyclodiphosphate (ME-2,4cPP) into 1-hydroxy-2-methyl-2-(E)-butenyl 4-diphosphate. This Pseudomonas syringae pv. syringae (strain B728a) protein is 4-hydroxy-3-methylbut-2-en-1-yl diphosphate synthase (flavodoxin).